A 480-amino-acid polypeptide reads, in one-letter code: tRNA-2-methylthio-N(6)-dimethylallyladenosine synthase (480 aa).

The region spanning 3-120 (KKLYIKTWGC…LPEMLNQLQH (118 aa)) is the MTTase N-terminal domain. Positions 12, 49, 83, 157, 161, and 164 each coordinate [4Fe-4S] cluster. In terms of domain architecture, Radical SAM core spans 143–375 (KADGASAFVS…QEQITHQALR (233 aa)). The region spanning 378–441 (RQMLNTEQRV…ANSLRGELVR (64 aa)) is the TRAM domain.

This sequence belongs to the methylthiotransferase family. MiaB subfamily. As to quaternary structure, monomer. Requires [4Fe-4S] cluster as cofactor.

Its subcellular location is the cytoplasm. The enzyme catalyses N(6)-dimethylallyladenosine(37) in tRNA + (sulfur carrier)-SH + AH2 + 2 S-adenosyl-L-methionine = 2-methylsulfanyl-N(6)-dimethylallyladenosine(37) in tRNA + (sulfur carrier)-H + 5'-deoxyadenosine + L-methionine + A + S-adenosyl-L-homocysteine + 2 H(+). Functionally, catalyzes the methylthiolation of N6-(dimethylallyl)adenosine (i(6)A), leading to the formation of 2-methylthio-N6-(dimethylallyl)adenosine (ms(2)i(6)A) at position 37 in tRNAs that read codons beginning with uridine. This Colwellia psychrerythraea (strain 34H / ATCC BAA-681) (Vibrio psychroerythus) protein is tRNA-2-methylthio-N(6)-dimethylallyladenosine synthase.